The following is a 511-amino-acid chain: MGTESLVHVLLVSFPGHGHVNPLLRLGRLLASKGFFLTLTTPESFGKQMRKAGNFTYEPTPVGDGFIRFEFFEDGWDEDDPRREDLDQYMAQLELIGKQVIPKIIKKSAEEYRPVSCLINNPFIPWVSDVAESLGLPSAMLWVQSCACFAAYYHYFHGLVPFPSEKEPEIDVQLPCMPLLKHDEMPSFLHPSTPYPFLRRAILGQYENLGKPFCILLDTFYELEKEIIDYMAKICPIKPVGPLFKNPKAPTLTVRDDCMKPDECIDWLDKKPPSSVVYISFGTVVYLKQEQVEEIGYALLNSGISFLWVMKPPPEDSGVKIVDLPDGFLEKVGDKGKVVQWSPQEKVLAHPSVACFVTHCGWNSTMESLASGVPVITFPQWGDQVTDAMYLCDVFKTGLRLCRGEAENRIISRDEVEKCLLEATAGPKAVALEENALKWKKEAEEAVADGGSSDRNIQAFVDEVRRTSVEIITSSKSKSIHRVKELVEKTATATANDKVELVESRRTRVQY.

The active-site Proton acceptor is the histidine 19. Position 19 (histidine 19) interacts with an anthocyanidin. UDP-alpha-D-glucose-binding residues include glutamine 344, histidine 359, tryptophan 362, asparagine 363, serine 364, and glutamate 367. An an anthocyanidin-binding site is contributed by glycine 382. Residues aspartate 383 and glutamine 384 each contribute to the UDP-alpha-D-glucose site.

Belongs to the UDP-glycosyltransferase family.

The catalysed reaction is limonin + UDP-alpha-D-glucose + H2O = limonin 17-beta-D-glucoside + UDP + 2 H(+). In terms of biological role, involved in the glucosylation of limonoids. The chain is Limonoid UDP-glucosyltransferase from Citrus unshiu (Satsuma mandarin).